We begin with the raw amino-acid sequence, 110 residues long: Iron-sulfur cluster assembly protein CyaY (110 aa).

Belongs to the frataxin family.

In terms of biological role, involved in iron-sulfur (Fe-S) cluster assembly. May act as a regulator of Fe-S biogenesis. The chain is Iron-sulfur cluster assembly protein CyaY from Pseudomonas fluorescens (strain Pf0-1).